A 264-amino-acid polypeptide reads, in one-letter code: S-adenosylmethionine decarboxylase proenzyme (264 aa).

Residue Ser112 is the Schiff-base intermediate with substrate; via pyruvic acid of the active site. Pyruvic acid (Ser); by autocatalysis is present on Ser112. The active-site Proton acceptor; for processing activity is the His117. Cys140 acts as the Proton donor; for catalytic activity in catalysis.

The protein belongs to the prokaryotic AdoMetDC family. Type 2 subfamily. Heterooctamer of four alpha and four beta chains arranged as a tetramer of alpha/beta heterodimers. It depends on pyruvate as a cofactor. Post-translationally, is synthesized initially as an inactive proenzyme. Formation of the active enzyme involves a self-maturation process in which the active site pyruvoyl group is generated from an internal serine residue via an autocatalytic post-translational modification. Two non-identical subunits are generated from the proenzyme in this reaction, and the pyruvate is formed at the N-terminus of the alpha chain, which is derived from the carboxyl end of the proenzyme. The post-translation cleavage follows an unusual pathway, termed non-hydrolytic serinolysis, in which the side chain hydroxyl group of the serine supplies its oxygen atom to form the C-terminus of the beta chain, while the remainder of the serine residue undergoes an oxidative deamination to produce ammonia and the pyruvoyl group blocking the N-terminus of the alpha chain.

It carries out the reaction S-adenosyl-L-methionine + H(+) = S-adenosyl 3-(methylsulfanyl)propylamine + CO2. It functions in the pathway amine and polyamine biosynthesis; S-adenosylmethioninamine biosynthesis; S-adenosylmethioninamine from S-adenosyl-L-methionine: step 1/1. Its function is as follows. Catalyzes the decarboxylation of S-adenosylmethionine to S-adenosylmethioninamine (dcAdoMet), the propylamine donor required for the synthesis of the polyamines spermine and spermidine from the diamine putrescine. The chain is S-adenosylmethionine decarboxylase proenzyme from Shigella dysenteriae serotype 1 (strain Sd197).